The following is a 407-amino-acid chain: FMN-dependent alpha-hydroxy acid dehydrogenase PB1A11.03 (407 aa).

One can recognise an FMN hydroxy acid dehydrogenase domain in the interval 28–406; the sequence is QRPQITVDGR…DLNRDVLYKE (379 aa). Tyr-54 is a binding site for a 2-oxocarboxylate. FMN-binding residues include Ser-136 and Gln-158. Tyr-160 lines the a 2-oxocarboxylate pocket. FMN is bound at residue Thr-188. Arg-197 contacts a 2-oxocarboxylate. An FMN-binding site is contributed by Lys-277. His-301 acts as the Proton acceptor in catalysis. Arg-304 is a binding site for a 2-oxocarboxylate. FMN is bound by residues 332–336 and 355–356; these read DSGVR and GR.

It belongs to the FMN-dependent alpha-hydroxy acid dehydrogenase family. The cofactor is FMN.

It is found in the cytoplasm. Its subcellular location is the nucleus. This Schizosaccharomyces pombe (strain 972 / ATCC 24843) (Fission yeast) protein is FMN-dependent alpha-hydroxy acid dehydrogenase PB1A11.03.